The sequence spans 571 residues: Proline--tRNA ligase (571 aa).

The protein belongs to the class-II aminoacyl-tRNA synthetase family. ProS type 1 subfamily. In terms of assembly, homodimer.

The protein resides in the cytoplasm. It carries out the reaction tRNA(Pro) + L-proline + ATP = L-prolyl-tRNA(Pro) + AMP + diphosphate. Its function is as follows. Catalyzes the attachment of proline to tRNA(Pro) in a two-step reaction: proline is first activated by ATP to form Pro-AMP and then transferred to the acceptor end of tRNA(Pro). As ProRS can inadvertently accommodate and process non-cognate amino acids such as alanine and cysteine, to avoid such errors it has two additional distinct editing activities against alanine. One activity is designated as 'pretransfer' editing and involves the tRNA(Pro)-independent hydrolysis of activated Ala-AMP. The other activity is designated 'posttransfer' editing and involves deacylation of mischarged Ala-tRNA(Pro). The misacylated Cys-tRNA(Pro) is not edited by ProRS. The chain is Proline--tRNA ligase from Stutzerimonas stutzeri (strain A1501) (Pseudomonas stutzeri).